The primary structure comprises 326 residues: MSKPVRMEPGVKLRDGDKMALIPVKFMPDPNEEVLRKPDWMRIKLPPSSQKIEHIKSTLRKNKLHSVCEEASCPNLAECFNHGTATFMIMGAICTRRCPFCDVAHGRPLALDPDEPQKLALTIKEMGLKYVVITSVDRDDLRDGGAQHFADCIKQIREHSPQTRIEILTPDFRGRMEQALEVFRETPPDVFNHNLETAPRMYRVARPGADYKWSLELLRRIKEMHPHVPTKSGVMMGLGETNEEIVQVLKDLREHGVNMLTLGQYLQPSRHHLPVKRYVPPAEFDELKDVAMGLGFSHAACGPFVRSSYHADLQAKGEEVVGYKAK.

7 residues coordinate [4Fe-4S] cluster: Cys68, Cys73, Cys79, Cys94, Cys98, Cys101, and Ser308. Residues 80–297 (FNHGTATFMI…KDVAMGLGFS (218 aa)) form the Radical SAM core domain.

Belongs to the radical SAM superfamily. Lipoyl synthase family. It depends on [4Fe-4S] cluster as a cofactor.

Its subcellular location is the cytoplasm. It carries out the reaction [[Fe-S] cluster scaffold protein carrying a second [4Fe-4S](2+) cluster] + N(6)-octanoyl-L-lysyl-[protein] + 2 oxidized [2Fe-2S]-[ferredoxin] + 2 S-adenosyl-L-methionine + 4 H(+) = [[Fe-S] cluster scaffold protein] + N(6)-[(R)-dihydrolipoyl]-L-lysyl-[protein] + 4 Fe(3+) + 2 hydrogen sulfide + 2 5'-deoxyadenosine + 2 L-methionine + 2 reduced [2Fe-2S]-[ferredoxin]. It participates in protein modification; protein lipoylation via endogenous pathway; protein N(6)-(lipoyl)lysine from octanoyl-[acyl-carrier-protein]: step 2/2. Catalyzes the radical-mediated insertion of two sulfur atoms into the C-6 and C-8 positions of the octanoyl moiety bound to the lipoyl domains of lipoate-dependent enzymes, thereby converting the octanoylated domains into lipoylated derivatives. The protein is Lipoyl synthase of Aeromonas salmonicida (strain A449).